Reading from the N-terminus, the 504-residue chain is Maturase K (504 aa).

This sequence belongs to the intron maturase 2 family. MatK subfamily.

The protein localises to the plastid. It localises to the chloroplast. Usually encoded in the trnK tRNA gene intron. Probably assists in splicing its own and other chloroplast group II introns. This Pentaplaris doroteae protein is Maturase K.